The chain runs to 625 residues: Chaperone protein HtpG (625 aa).

An a; substrate-binding region spans residues 1–337; the sequence is MSTNQETRGF…TNDLPLNVSR (337 aa). The segment at 338–554 is b; sequence EILQENKITA…NDEMTTQMAK (217 aa). Residues 555-625 are c; that stretch reads LFAAMGQKAP…FIKRMNKLLG (71 aa).

Belongs to the heat shock protein 90 family. In terms of assembly, homodimer.

The protein localises to the cytoplasm. In terms of biological role, molecular chaperone. Has ATPase activity. This chain is Chaperone protein HtpG, found in Actinobacillus pleuropneumoniae serotype 5b (strain L20).